The chain runs to 617 residues: UvrABC system protein C (617 aa).

A GIY-YIG domain is found at 22–100 (KLPGVYRFFD…IKALSPKYNI (79 aa)). The 36-residue stretch at 209–244 (DELTRTLQHKMQTAAANLQFEEAARYRDQIQALGIM) folds into the UVR domain.

Belongs to the UvrC family. In terms of assembly, interacts with UvrB in an incision complex.

The protein localises to the cytoplasm. Functionally, the UvrABC repair system catalyzes the recognition and processing of DNA lesions. UvrC both incises the 5' and 3' sides of the lesion. The N-terminal half is responsible for the 3' incision and the C-terminal half is responsible for the 5' incision. This Neisseria meningitidis serogroup A / serotype 4A (strain DSM 15465 / Z2491) protein is UvrABC system protein C.